The primary structure comprises 347 residues: Phosphoribosylformylglycinamidine cyclo-ligase (347 aa).

The protein belongs to the AIR synthase family.

Its subcellular location is the cytoplasm. It carries out the reaction 2-formamido-N(1)-(5-O-phospho-beta-D-ribosyl)acetamidine + ATP = 5-amino-1-(5-phospho-beta-D-ribosyl)imidazole + ADP + phosphate + H(+). It participates in purine metabolism; IMP biosynthesis via de novo pathway; 5-amino-1-(5-phospho-D-ribosyl)imidazole from N(2)-formyl-N(1)-(5-phospho-D-ribosyl)glycinamide: step 2/2. This chain is Phosphoribosylformylglycinamidine cyclo-ligase, found in Prochlorococcus marinus (strain AS9601).